The following is a 380-amino-acid chain: Glycerate kinase (380 aa).

It belongs to the glycerate kinase type-1 family.

It catalyses the reaction (R)-glycerate + ATP = (2R)-3-phosphoglycerate + ADP + H(+). This chain is Glycerate kinase (glxK), found in Halalkalibacterium halodurans (strain ATCC BAA-125 / DSM 18197 / FERM 7344 / JCM 9153 / C-125) (Bacillus halodurans).